A 354-amino-acid chain; its full sequence is Methionine import ATP-binding protein MetN 2 (354 aa).

Positions 6 to 250 (IELKNISVHF…PQKPLTKEFI (245 aa)) constitute an ABC transporter domain. 42–49 (GYSGAGKS) is an ATP binding site.

It belongs to the ABC transporter superfamily. Methionine importer (TC 3.A.1.24) family. As to quaternary structure, the complex is composed of two ATP-binding proteins (MetN), two transmembrane proteins (MetI) and a solute-binding protein (MetQ).

Its subcellular location is the cell membrane. The catalysed reaction is L-methionine(out) + ATP + H2O = L-methionine(in) + ADP + phosphate + H(+). The enzyme catalyses D-methionine(out) + ATP + H2O = D-methionine(in) + ADP + phosphate + H(+). Part of the ABC transporter complex MetNIQ involved in methionine import. Responsible for energy coupling to the transport system. The protein is Methionine import ATP-binding protein MetN 2 of Oenococcus oeni (strain ATCC BAA-331 / PSU-1).